The chain runs to 309 residues: Mitochondrial glycine transporter (309 aa).

Solcar repeat units follow at residues 2–94 (SNVG…LRAL), 124–207 (LTSQ…IKHE), and 219–304 (QATL…GLML). 6 helical membrane-spanning segments follow: residues 8 to 33 (LLSGGLSGLATTVCLQPFDLLKTRLQ), 69 to 95 (GTTPSLVRNVPGVALYMTSLTQLRALM), 130 to 155 (LIAGATTRVGVGFLLNPFSVLKARFE), 182 to 205 (GFLASSLRDAPYAGLFVVFYEGIK), 223 to 249 (IHGLSAASAGAIATMATHPFDVIKTKI), and 279 to 297 (GASLRMSRKVLSSAIGWAV).

It belongs to the mitochondrial carrier (TC 2.A.29) family. SLC25A38 subfamily.

The protein resides in the mitochondrion inner membrane. The catalysed reaction is glycine(in) = glycine(out). Its function is as follows. Mitochondrial glycine transporter that imports glycine into the mitochondrial matrix. Plays an important role in providing glycine for the first enzymatic step in heme biosynthesis, the condensation of glycine with succinyl-CoA to produce 5-aminolevulinate (ALA) in the mitochondrial matrix. The protein is Mitochondrial glycine transporter of Laccaria bicolor (strain S238N-H82 / ATCC MYA-4686) (Bicoloured deceiver).